A 241-amino-acid polypeptide reads, in one-letter code: MSSMEGKKVPQVTFRTRQGDKWVDVTTSELFDNKTVIVFSLPGAFTPTCSSSHLPRYNELAPVFKKYGVDDILVVSVNDTFVMNAWKEDEKSENISFIPDGNGEFTEGMGMLVGKEDLGFGKRSWRYSMLVKNGVVEKMFIEPNEPGDPFKVSDADTMLKYLAPQHQVQESISIFTKPGCPFCAKAKQLLHDKGLSFEEIILGHDATIVSVRAVSGRTTVPQVFIGGKHIGGSDDLEKYFA.

The Thioredoxin domain maps to 3–167 (SMEGKKVPQV…MLKYLAPQHQ (165 aa)). Cys-49 acts as the Cysteine sulfenic acid (-SOH) intermediate; for peroxiredoxin activity in catalysis. A Glutaredoxin domain is found at 170–241 (ESISIFTKPG…GSDDLEKYFA (72 aa)). Cys-180 and Cys-183 are joined by a disulfide.

In the N-terminal section; belongs to the peroxiredoxin family. Prx5 subfamily. The protein in the C-terminal section; belongs to the glutaredoxin family. In terms of assembly, homotetramer; interconnecting Prx and Grx domains of different monomers.

It carries out the reaction a hydroperoxide + 2 glutathione = an alcohol + glutathione disulfide + H2O. Functionally, thiol-specific peroxidase that catalyzes the reduction of hydrogen peroxide and organic hydroperoxides to water and alcohols, respectively. Plays a role in cell protection against oxidative stress by detoxifying peroxides. The protein is Hybrid peroxiredoxin hyPrx5 (PGdx) of Haemophilus influenzae (strain ATCC 51907 / DSM 11121 / KW20 / Rd).